A 406-amino-acid polypeptide reads, in one-letter code: 8-amino-7-oxononanoate synthase (406 aa).

Arg-21 lines the substrate pocket. A pyridoxal 5'-phosphate-binding site is contributed by 112–113 (GY). A substrate-binding site is contributed by His-137. Pyridoxal 5'-phosphate is bound by residues Ser-183, His-211, and Thr-239. Position 242 is an N6-(pyridoxal phosphate)lysine (Lys-242). Thr-358 is a substrate binding site.

The protein belongs to the class-II pyridoxal-phosphate-dependent aminotransferase family. BioF subfamily. In terms of assembly, homodimer. It depends on pyridoxal 5'-phosphate as a cofactor.

The catalysed reaction is 6-carboxyhexanoyl-[ACP] + L-alanine + H(+) = (8S)-8-amino-7-oxononanoate + holo-[ACP] + CO2. Its pathway is cofactor biosynthesis; biotin biosynthesis. Its function is as follows. Catalyzes the decarboxylative condensation of pimeloyl-[acyl-carrier protein] and L-alanine to produce 8-amino-7-oxononanoate (AON), [acyl-carrier protein], and carbon dioxide. The chain is 8-amino-7-oxononanoate synthase from Burkholderia cenocepacia (strain HI2424).